The following is a 910-amino-acid chain: Adhesion G-protein coupled receptor F1 (910 aa).

The first 19 residues, 1–19 (MKVGVLWLISFFTFTDGHG), serve as a signal peptide directing secretion. The Extracellular portion of the chain corresponds to 20–583 (GFLGKNDGIK…SPFVPSTIFP (564 aa)). N-linked (GlcNAc...) asparagine glycans are attached at residues Asn-139, Asn-168, Asn-205, Asn-282, Asn-310, Asn-317, Asn-329, Asn-354, Asn-368, Asn-389, Asn-410, Asn-423, Asn-437, Asn-455, Asn-512, Asn-528, and Asn-553. Residues 148–256 (ERTKIWGTFK…GSFRVFGKAQ (109 aa)) enclose the SEA domain. 2 disulfides stabilise this stretch: Cys-257/Cys-287 and Cys-275/Cys-299. A GAIN-B domain is found at 437 to 579 (NKSQLKRGYS…SILMSPFVPS (143 aa)). 2 cysteine pairs are disulfide-bonded: Cys-534–Cys-561 and Cys-549–Cys-563. A GPS region spans residues 534–579 (CVFWDFSHLQWNDAGCHLVNETQDIVTCQCTHLTSFSILMSPFVPS). Positions 568 to 576 (SFSILMSPF) are stachel. A helical transmembrane segment spans residues 584-609 (VVKWITYVGLGISIGSLILCLIIEAL). Residues 610 to 621 (FWKQIKKSQTSH) lie on the Cytoplasmic side of the membrane. Residues 622-646 (TRRICMVNIALSLLIADVWFIVGAT) form a helical membrane-spanning segment. Residues 647–658 (VDTTVNPSGVCT) are Extracellular-facing. Cys-657 and Cys-733 are oxidised to a cystine. Residues 659–684 (AAVFFTHFFYLSLFFWMLMLGILLAY) form a helical membrane-spanning segment. The Cytoplasmic segment spans residues 685 to 696 (RIILVFHHMAQH). The helical transmembrane segment at 697-719 (LMMAVGFCLGYGCPLIISVITIA) threads the bilayer. Residues 720-742 (VTQPSNTYKRKDVCWLNWSNGSK) lie on the Extracellular side of the membrane. N-linked (GlcNAc...) asparagine glycosylation is found at Asn-736 and Asn-739. Residues 743–767 (PLLAFVVPALAIVAVNFVVVLLVLT) form a helical membrane-spanning segment. The Cytoplasmic portion of the chain corresponds to 768–784 (KLWRPTVGERLSRDDKA). A helical membrane pass occupies residues 785-813 (TIIRVGKSLLILTPLLGLTWGFGIGTIVD). Topologically, residues 814 to 816 (SQN) are extracellular. The helical transmembrane segment at 817-842 (LAWHVIFALLNAFQGFFILCFGILLD) threads the bilayer. Over 843-910 (SKLRQLLFNK…IMLTQFVSNE (68 aa)) the chain is Cytoplasmic.

Belongs to the G-protein coupled receptor 2 family. Adhesion G-protein coupled receptor (ADGR) subfamily. In terms of assembly, heterodimer of 2 chains generated by proteolytic processing; the large extracellular N-terminal fragment and the membrane-bound C-terminal fragment predominantly remain associated and non-covalently linked. Autoproteolytically processed at the GPS region of the GAIN-B domain; this cleavage modulates receptor activity. In terms of processing, glycosylated. Glycosylation at Asn-389 is required for secretion or folding. In terms of tissue distribution, mainly expressed in the kidney. Up-regulated in lung adenocarcinomas and prostate cancers.

The protein localises to the cell membrane. Its subcellular location is the secreted. Its activity is regulated as follows. Forms a heterodimer of 2 chains generated by proteolytic processing that remain associated through non-covalent interactions mediated by the GAIN-B domain. In the inactivated receptor, the Stachel sequence (also named stalk) is embedded in the GAIN-B domain, where it adopts a beta-strand conformation. On activation, the Stachel moves into the 7 transmembrane region and adopts a twisted hook-shaped configuration that forms contacts within the receptor, leading to coupling of a G-alpha protein, which activates signaling. The cleaved GAIN-B and N-terminal domains can then dissociate from the rest of the receptor. Its function is as follows. Adhesion G-protein coupled receptor (aGPCR) for N-docosahexaenoylethanolamine (synaptamide), an omega-3 fatty acid lipid highly enriched in the brain. Ligand binding causes a conformation change that triggers signaling via guanine nucleotide-binding proteins (G proteins) and modulates the activity of downstream effectors, such as adenylate cyclase. ADGRF1 is coupled to G(s) G proteins and mediates activation of adenylate cyclase activity. Also able to couple to G(q), G(i) and G(12)/G(13) G proteins; additional evidence is however required to confirm this result in vivo. Involved in the development of neurons and cognitive function. In liver, involved in fat accumulation. In Homo sapiens (Human), this protein is Adhesion G-protein coupled receptor F1.